The sequence spans 486 residues: Arginine/agmatine antiporter (486 aa).

Helical transmembrane passes span 12–32, 41–61, 85–105, 129–149, 161–181, 211–231, 242–262, 296–316, 341–361, 367–387, 418–438, and 461–481; these read LGAI…GIFS, AGAG…FFIA, GFGP…QIFG, NTIP…FIVL, IGTI…AFFF, STML…VMSA, ATIL…LLPF, IGLL…VAEI, VSLY…YFST, MLSI…AFLV, IWLI…LLAL, and EVTK…LFST.

Belongs to the amino acid-polyamine-organocation (APC) superfamily. Basic amino acid/polyamine antiporter (APA) (TC 2.A.3.2) family.

Its subcellular location is the cell inner membrane. Catalyzes the exchange of L-arginine for agmatine. The arginine uptake by the bacterium in the macrophage may be a virulence factor against the host innate immune response. The protein is Arginine/agmatine antiporter (aaxC) of Chlamydia felis (strain Fe/C-56) (Chlamydophila felis).